A 200-amino-acid chain; its full sequence is NADH-quinone oxidoreductase subunit C (200 aa).

This sequence belongs to the complex I 30 kDa subunit family. In terms of assembly, NDH-1 is composed of 14 different subunits. Subunits NuoB, C, D, E, F, and G constitute the peripheral sector of the complex.

The protein localises to the cell inner membrane. It catalyses the reaction a quinone + NADH + 5 H(+)(in) = a quinol + NAD(+) + 4 H(+)(out). Its function is as follows. NDH-1 shuttles electrons from NADH, via FMN and iron-sulfur (Fe-S) centers, to quinones in the respiratory chain. The immediate electron acceptor for the enzyme in this species is believed to be ubiquinone. Couples the redox reaction to proton translocation (for every two electrons transferred, four hydrogen ions are translocated across the cytoplasmic membrane), and thus conserves the redox energy in a proton gradient. The sequence is that of NADH-quinone oxidoreductase subunit C from Burkholderia ambifaria (strain ATCC BAA-244 / DSM 16087 / CCUG 44356 / LMG 19182 / AMMD) (Burkholderia cepacia (strain AMMD)).